Consider the following 76-residue polypeptide: ATP synthase subunit 9, mitochondrial (76 aa).

2 helical membrane passes run 10-30 (IGAG…AIVF) and 52-72 (ILGF…SFLL).

This sequence belongs to the ATPase C chain family. In terms of assembly, F-type ATPases have 2 components, CF(1) - the catalytic core - and CF(0) - the membrane proton channel. CF(1) has five subunits: alpha(3), beta(3), gamma(1), delta(1), epsilon(1). CF(0) has three main subunits: a, b and c.

The protein resides in the mitochondrion membrane. Functionally, mitochondrial membrane ATP synthase (F(1)F(0) ATP synthase or Complex V) produces ATP from ADP in the presence of a proton gradient across the membrane which is generated by electron transport complexes of the respiratory chain. F-type ATPases consist of two structural domains, F(1) - containing the extramembraneous catalytic core and F(0) - containing the membrane proton channel, linked together by a central stalk and a peripheral stalk. During catalysis, ATP synthesis in the catalytic domain of F(1) is coupled via a rotary mechanism of the central stalk subunits to proton translocation. Part of the complex F(0) domain. A homomeric c-ring of probably 10 subunits is part of the complex rotary element. The sequence is that of ATP synthase subunit 9, mitochondrial (ATP9) from Kluyveromyces lactis (strain ATCC 8585 / CBS 2359 / DSM 70799 / NBRC 1267 / NRRL Y-1140 / WM37) (Yeast).